Reading from the N-terminus, the 314-residue chain is MDVFDGLPDPIIVDILNKVGDVKTLLRCSSLSKRFNSLVPQSESLTLRLDHSVSDSPVVTSIFRSLFNGLVSLLSKPAKPITITTLSPSLPFKILSRFDRIRNLDVELPGGDVKLEKGAAVKWKAEFGKTLKSCVIVAFRSAGTVSSPVAVEGESDAEFVTGLKTRVVWTISALMAASSRHYLMREVVKEHEEIESLVMRDKEREGTVVMNEEGLKELRNTEARVEDEERVVKNKRSVVPSVRMSMRHAPSLKLKSGICLESATLVIVRPSGADFEVGDDAELATEAFVGDCMYGEAVVALLKCKKNALEMNSF.

One can recognise an F-box domain in the interval Met-1–Leu-49.

In terms of assembly, part of a SCF (ASK-cullin-F-box) protein ligase complex.

The protein localises to the nucleus. Its pathway is protein modification; protein ubiquitination. Component of SCF(ASK-cullin-F-box) E3 ubiquitin ligase complexes, which may mediate the ubiquitination and subsequent proteasomal degradation of target proteins. The chain is F-box protein AUF2 from Arabidopsis thaliana (Mouse-ear cress).